Reading from the N-terminus, the 134-residue chain is Holo-[acyl-carrier-protein] synthase (134 aa).

Positions 8 and 57 each coordinate Mg(2+).

Belongs to the P-Pant transferase superfamily. AcpS family. It depends on Mg(2+) as a cofactor.

It is found in the cytoplasm. The enzyme catalyses apo-[ACP] + CoA = holo-[ACP] + adenosine 3',5'-bisphosphate + H(+). Functionally, transfers the 4'-phosphopantetheine moiety from coenzyme A to a Ser of acyl-carrier-protein. This is Holo-[acyl-carrier-protein] synthase from Roseobacter denitrificans (strain ATCC 33942 / OCh 114) (Erythrobacter sp. (strain OCh 114)).